Consider the following 330-residue polypeptide: MAVLGAPGVLCDNGATAERPTLDHHWDLWKKTRMRRNTDQNEEDVRRLIWEKNLKFIMLHNLEHSMGMHSYSVGMNHMGDMTPEEVIGYMGSLRIPRPWNRSGTLKSSSNQTLPDSVDWREKGCVTNVKYQGSCGSCWAFSAEGALEGQLKLKTGKLVSLSAQNLVDCSTEEKYGNKGCGGGFMTEAFQYIIDTSIDSEASYPYKAMDEKCLYDPKNRAATCSRYIELPFGDEEALKEAVATKGPVSVGIDDASHSSFFLYQSGVYDDPSCTENMNHGVLVVGYGTLDGKDYWLVKNSWGLHFGDQGYIRMARNNKNHCGIASYCSYPEI.

Positions M1–A17 are cleaved as a signal peptide. Positions E18–T112 are cleaved as a propeptide — activation peptide. N-linked (GlcNAc...) asparagine glycosylation is found at N100 and N110. Cystine bridges form between C124–C222, C134–C179, C168–C211, and C271–C319. The active site involves C137. Catalysis depends on residues H277 and N297.

It belongs to the peptidase C1 family. As to quaternary structure, monomer. In terms of tissue distribution, highest levels occur in the ileum followed by spleen, brain, thyroid, ovary and uterus. Low levels are found in the liver, kidney, jejunum and lung with lowest levels in the heart.

The protein resides in the lysosome. It is found in the secreted. Its subcellular location is the cytoplasmic vesicle. It localises to the phagosome. The enzyme catalyses Similar to cathepsin L, but with much less activity on Z-Phe-Arg-|-NHMec, and more activity on the Z-Val-Val-Arg-|-Xaa compound.. Thiol protease. Key protease responsible for the removal of the invariant chain from MHC class II molecules and MHC class II antigen presentation. The bond-specificity of this proteinase is in part similar to the specificities of cathepsin L. This Rattus norvegicus (Rat) protein is Cathepsin S (Ctss).